The primary structure comprises 108 residues: Integration host factor subunit alpha (108 aa).

Belongs to the bacterial histone-like protein family. In terms of assembly, heterodimer of an alpha and a beta chain.

Its function is as follows. This protein is one of the two subunits of integration host factor, a specific DNA-binding protein that functions in genetic recombination as well as in transcriptional and translational control. This is Integration host factor subunit alpha from Methylorubrum populi (strain ATCC BAA-705 / NCIMB 13946 / BJ001) (Methylobacterium populi).